Reading from the N-terminus, the 605-residue chain is Elongation factor 4 (605 aa).

The 184-residue stretch at 9 to 192 folds into the tr-type G domain; the sequence is GMIRNFCIIA…AIVQRIPAPA (184 aa). Residues 21–26 and 139–142 each bind GTP; these read DHGKST and NKID.

It belongs to the TRAFAC class translation factor GTPase superfamily. Classic translation factor GTPase family. LepA subfamily.

It localises to the cell inner membrane. It catalyses the reaction GTP + H2O = GDP + phosphate + H(+). Functionally, required for accurate and efficient protein synthesis under certain stress conditions. May act as a fidelity factor of the translation reaction, by catalyzing a one-codon backward translocation of tRNAs on improperly translocated ribosomes. Back-translocation proceeds from a post-translocation (POST) complex to a pre-translocation (PRE) complex, thus giving elongation factor G a second chance to translocate the tRNAs correctly. Binds to ribosomes in a GTP-dependent manner. This chain is Elongation factor 4, found in Chlorobaculum parvum (strain DSM 263 / NCIMB 8327) (Chlorobium vibrioforme subsp. thiosulfatophilum).